The chain runs to 103 residues: Large ribosomal subunit protein bL32m (103 aa).

Residues 1–47 (MALLRGNSLAISQKMLSVFQASALPHISLRIFISPPSIANIWNSILL) constitute a mitochondrion transit peptide. Positions 77, 80, 90, and 93 each coordinate Zn(2+).

It belongs to the bacterial ribosomal protein bL32 family. Component of the mitochondrial large ribosomal subunit (mt-LSU). Mature yeast 74S mitochondrial ribosomes consist of a small (37S) and a large (54S) subunit. The 37S small subunit contains a 15S ribosomal RNA (15S mt-rRNA) and at least 32 different proteins. The 54S large subunit contains a 21S rRNA (21S mt-rRNA) and at least 45 different proteins. bL32m has a zinc binding site. In terms of processing, MRPL32 precursor is processed by the m-AAA protease, which cleaves the N-terminal transit peptide. Cleavage by the m-AAA protease takes place prior to assembly into the large subunit, an essential step for mitochondrial ribosome (mitoribosome) assembly. Proper processing by the m-AAA protease is dependent on the zinc-binding region within the tightly folded C-terminal domain of MRPL32: zinc-dependent folding halts degradation initiated from the N-terminus and triggers the release of mature mrpl32.

It localises to the mitochondrion. Functionally, component of the mitochondrial ribosome (mitoribosome), a dedicated translation machinery responsible for the synthesis of mitochondrial genome-encoded proteins, including at least some of the essential transmembrane subunits of the mitochondrial respiratory chain. The mitoribosomes are attached to the mitochondrial inner membrane and translation products are cotranslationally integrated into the membrane. This Schizosaccharomyces pombe (strain 972 / ATCC 24843) (Fission yeast) protein is Large ribosomal subunit protein bL32m (mrpl32).